A 2828-amino-acid chain; its full sequence is Matrix-remodeling-associated protein 5 (2828 aa).

An N-terminal signal peptide occupies residues Met1–Ala26. Residues Cys27–Lys55 form the LRRNT domain. LRR repeat units lie at residues His56–Gly77, Lys80–Asp101, Ser104–Gly125, Asn128–Gly149, Ser152–Thr173, and Thr184–Asn205. The LRRCT domain occupies Asn217–Lys277. Asn287 and Asn321 each carry an N-linked (GlcNAc...) asparagine glycan. 2 consecutive Ig-like C2-type domains span residues Pro481 to Leu571 and Pro575 to Thr669. 2 disulfides stabilise this stretch: Cys501/Cys555 and Cys599/Cys651. N-linked (GlcNAc...) asparagine glycosylation occurs at Asn633. Disordered stretches follow at residues Lys671–Leu715, Lys933–Pro962, Gln1068–Ile1190, Ala1204–Thr1275, and Glu1367–Gly1389. The span at Ile695–Glu708 shows a compositional bias: acidic residues. The O-linked (Xyl...) (chondroitin sulfate) serine glycan is linked to Ser702. Over residues Ser951–Pro962 the composition is skewed to low complexity. Positions Ser1090 to Ser1107 are enriched in polar residues. Positions Pro1146–Gln1168 are enriched in basic residues. Composition is skewed to polar residues over residues Thr1169 to Ile1190 and Ala1204 to Lys1214. Basic residues predominate over residues Thr1229 to Tyr1243. Asn1403 carries N-linked (GlcNAc...) asparagine glycosylation. The LRR 7 repeat unit spans residues Leu1410–Gln1434. Disordered regions lie at residues Gln1479 to Ile1499, Asn1536 to Asp1566, Gln1579 to His1603, Ser1669 to Asp1689, and Lys1700 to Ser1719. Over residues Thr1542–Asp1566 the composition is skewed to polar residues. An N-linked (GlcNAc...) asparagine glycan is attached at Asn1735. Ig-like C2-type domains are found at residues Pro1853 to Thr1946, Pro1950 to His2041, Pro2046 to Gln2140, Ala2146 to Val2239, Pro2242 to Thr2343, Pro2345 to Trp2432, Pro2440 to Thr2534, Pro2542 to Ser2630, Pro2637 to Thr2722, and Pro2733 to Phe2828. Cystine bridges form between Cys1875-Cys1928 and Cys1972-Cys2025. N-linked (GlcNAc...) asparagine glycosylation is found at Asn2007 and Asn2056. Cystine bridges form between Cys2069/Cys2122, Cys2168/Cys2221, Cys2265/Cys2324, Cys2368/Cys2418, Cys2466/Cys2518, Cys2564/Cys2616, Cys2659/Cys2711, and Cys2755/Cys2810. N-linked (GlcNAc...) asparagine glycosylation occurs at Asn2693.

Detected in placenta (at protein level). Detected in cerebrospinal fluid and fibroblasts (at protein level). Highly expressed in kidney, also detected on liver and spleen. Expressed by proximal tubular cells of the kidney (at protein level). Expression highly increases during chronic kidney disease and autosomal dominant polycystic kidney disease, where is detected in cysts.

Its subcellular location is the secreted. Its function is as follows. In kidney, has anti-inflammatory and anti-fibrotic properties by limiting the induction of chemokines, fibronectin and collagen expression in response to TGB1 and pro-inflammatory stimuli. The protein is Matrix-remodeling-associated protein 5 (MXRA5) of Homo sapiens (Human).